A 628-amino-acid polypeptide reads, in one-letter code: Putative ankyrin repeat protein L769 (628 aa).

ANK repeat units follow at residues Asn-217 to Phe-246, Asp-333 to Arg-362, Thr-421 to Leu-451, and Asn-512 to Tyr-542.

This chain is Putative ankyrin repeat protein L769, found in Acanthamoeba polyphaga mimivirus (APMV).